The chain runs to 181 residues: UPF0397 protein str0306 (181 aa).

Transmembrane regions (helical) follow at residues 11 to 31, 45 to 65, 72 to 92, 109 to 129, and 147 to 167; these read ATGI…IPIF, LFSV…GHAL, GNIS…IGLF, IWFN…VTPI, and FVAG…LLAI.

It belongs to the UPF0397 family.

The protein localises to the cell membrane. The chain is UPF0397 protein str0306 from Streptococcus thermophilus (strain CNRZ 1066).